Here is a 467-residue protein sequence, read N- to C-terminus: ATP-dependent protease ATPase subunit HslU (467 aa).

Residues valine 22 and 64–69 (GVGKTE) each bind ATP. Residues 149–192 (QTNNPLESLFGGAIPNFGQNNEDEEEPPTEEIKTKRSEIKRQLE) form a disordered region. A compositionally biased stretch (basic and acidic residues) spans 178–192 (EEIKTKRSEIKRQLE). Aspartate 280, glutamate 345, and arginine 417 together coordinate ATP.

The protein belongs to the ClpX chaperone family. HslU subfamily. A double ring-shaped homohexamer of HslV is capped on each side by a ring-shaped HslU homohexamer. The assembly of the HslU/HslV complex is dependent on binding of ATP.

The protein localises to the cytoplasm. In terms of biological role, ATPase subunit of a proteasome-like degradation complex; this subunit has chaperone activity. The binding of ATP and its subsequent hydrolysis by HslU are essential for unfolding of protein substrates subsequently hydrolyzed by HslV. HslU recognizes the N-terminal part of its protein substrates and unfolds these before they are guided to HslV for hydrolysis. The sequence is that of ATP-dependent protease ATPase subunit HslU from Staphylococcus aureus (strain Mu3 / ATCC 700698).